We begin with the raw amino-acid sequence, 166 residues long: Small ribosomal subunit protein uS5 (166 aa).

The S5 DRBM domain maps to 12-75; it reads YIEKLVQVNR…EAARRNMIQV (64 aa).

It belongs to the universal ribosomal protein uS5 family. In terms of assembly, part of the 30S ribosomal subunit. Contacts proteins S4 and S8.

With S4 and S12 plays an important role in translational accuracy. In terms of biological role, located at the back of the 30S subunit body where it stabilizes the conformation of the head with respect to the body. The protein is Small ribosomal subunit protein uS5 of Pseudomonas entomophila (strain L48).